Consider the following 245-residue polypeptide: Platelet-derived growth factor subunit B (245 aa).

Positions 1-20 (MNRCWALFLSLCCYLRLVSA) are cleaved as a signal peptide. Residues 21-81 (EGDPIPEELY…ELESLSRGRR (61 aa)) constitute a propeptide, removed in mature form. Residue Asn63 is glycosylated (N-linked (GlcNAc...) asparagine). Cystine bridges form between Cys101-Cys145, Cys134-Cys182, and Cys138-Cys184. A propeptide spans 195–245 (RSPGSSQEQRARTPQTRVTIRTVRVRRPPKGKHQKFKHTHDKKALKETLGA) (removed in mature form). Residues 220-235 (RRPPKGKHQKFKHTHD) are compositionally biased toward basic residues. The disordered stretch occupies residues 220–245 (RRPPKGKHQKFKHTHDKKALKETLGA). A compositionally biased stretch (basic and acidic residues) spans 236–245 (KKALKETLGA).

The protein belongs to the PDGF/VEGF growth factor family. In terms of assembly, antiparallel homodimer; disulfide-linked. Antiparallel heterodimer with PDGFA; disulfide-linked. The PDGFB homodimer interacts with PDGFRA and PDGFRB homodimers, and with heterodimers formed by PDGFRA and PDGFRB. The heterodimer composed of PDGFA and PDGFB interacts with PDGFRB homodimers, and with heterodimers formed by PDGFRA and PDGFRB. Interacts with XLKD1. Interacts with LRP1. Interacts with SORL1 (via the N-terminal ectodomain). Interacts with CD82; this interaction inhibits PDGFB-mediated signaling pathway.

The protein localises to the secreted. In terms of biological role, growth factor that plays an essential role in the regulation of embryonic development, cell proliferation, cell migration, survival and chemotaxis. Potent mitogen for cells of mesenchymal origin. Required for normal proliferation and recruitment of pericytes and vascular smooth muscle cells in the central nervous system, skin, lung, heart and placenta. Required for normal blood vessel development, and for normal development of kidney glomeruli. Plays an important role in wound healing. Signaling is modulated by the formation of heterodimers with PDGFA. This Felis catus (Cat) protein is Platelet-derived growth factor subunit B (PDGFB).